The sequence spans 138 residues: Transcription antitermination protein NusB (138 aa).

Belongs to the NusB family.

In terms of biological role, involved in transcription antitermination. Required for transcription of ribosomal RNA (rRNA) genes. Binds specifically to the boxA antiterminator sequence of the ribosomal RNA (rrn) operons. This chain is Transcription antitermination protein NusB, found in Photorhabdus laumondii subsp. laumondii (strain DSM 15139 / CIP 105565 / TT01) (Photorhabdus luminescens subsp. laumondii).